The sequence spans 152 residues: Putative RING finger protein 157L (152 aa).

The segment at 111 to 146 (CVVCYENEICIKIQPCNHFVVCKSCFNRLNTCPMCR) adopts an RING-type zinc-finger fold.

Belongs to the IIV-6 157L family.

This is Putative RING finger protein 157L from Invertebrate iridescent virus 6 (IIV-6).